The chain runs to 212 residues: Thiamine-phosphate synthase (212 aa).

Residues 39 to 43 and Asn-71 contribute to the 4-amino-2-methyl-5-(diphosphooxymethyl)pyrimidine site; that span reads QLRIK. The Mg(2+) site is built by Asp-72 and Asp-91. Ser-110 lines the 4-amino-2-methyl-5-(diphosphooxymethyl)pyrimidine pocket. 2-[(2R,5Z)-2-carboxy-4-methylthiazol-5(2H)-ylidene]ethyl phosphate is bound at residue 136 to 138; that stretch reads TQT. A 4-amino-2-methyl-5-(diphosphooxymethyl)pyrimidine-binding site is contributed by Lys-139. 2-[(2R,5Z)-2-carboxy-4-methylthiazol-5(2H)-ylidene]ethyl phosphate is bound by residues Gly-168 and 188-189; that span reads VS.

This sequence belongs to the thiamine-phosphate synthase family. Requires Mg(2+) as cofactor.

It carries out the reaction 2-[(2R,5Z)-2-carboxy-4-methylthiazol-5(2H)-ylidene]ethyl phosphate + 4-amino-2-methyl-5-(diphosphooxymethyl)pyrimidine + 2 H(+) = thiamine phosphate + CO2 + diphosphate. The enzyme catalyses 2-(2-carboxy-4-methylthiazol-5-yl)ethyl phosphate + 4-amino-2-methyl-5-(diphosphooxymethyl)pyrimidine + 2 H(+) = thiamine phosphate + CO2 + diphosphate. It catalyses the reaction 4-methyl-5-(2-phosphooxyethyl)-thiazole + 4-amino-2-methyl-5-(diphosphooxymethyl)pyrimidine + H(+) = thiamine phosphate + diphosphate. It functions in the pathway cofactor biosynthesis; thiamine diphosphate biosynthesis; thiamine phosphate from 4-amino-2-methyl-5-diphosphomethylpyrimidine and 4-methyl-5-(2-phosphoethyl)-thiazole: step 1/1. Condenses 4-methyl-5-(beta-hydroxyethyl)thiazole monophosphate (THZ-P) and 2-methyl-4-amino-5-hydroxymethyl pyrimidine pyrophosphate (HMP-PP) to form thiamine monophosphate (TMP). This Serratia proteamaculans (strain 568) protein is Thiamine-phosphate synthase.